Here is a 561-residue protein sequence, read N- to C-terminus: DNA ligase B (561 aa).

Residue Lys125 is the N6-AMP-lysine intermediate of the active site.

This sequence belongs to the NAD-dependent DNA ligase family. LigB subfamily.

The catalysed reaction is NAD(+) + (deoxyribonucleotide)n-3'-hydroxyl + 5'-phospho-(deoxyribonucleotide)m = (deoxyribonucleotide)n+m + AMP + beta-nicotinamide D-nucleotide.. Functionally, catalyzes the formation of phosphodiester linkages between 5'-phosphoryl and 3'-hydroxyl groups in double-stranded DNA using NAD as a coenzyme and as the energy source for the reaction. The polypeptide is DNA ligase B (Salmonella dublin (strain CT_02021853)).